A 185-amino-acid chain; its full sequence is Elongation factor P (185 aa).

It belongs to the elongation factor P family.

It is found in the cytoplasm. It participates in protein biosynthesis; polypeptide chain elongation. Functionally, involved in peptide bond synthesis. Stimulates efficient translation and peptide-bond synthesis on native or reconstituted 70S ribosomes in vitro. Probably functions indirectly by altering the affinity of the ribosome for aminoacyl-tRNA, thus increasing their reactivity as acceptors for peptidyl transferase. This is Elongation factor P (efp) from Lactococcus lactis subsp. lactis (strain IL1403) (Streptococcus lactis).